The primary structure comprises 382 residues: Pyrimidine monooxygenase RutA (382 aa).

FMN-binding positions include 68 to 69 (IK), N134, E143, 159 to 160 (RY), and S209.

The protein belongs to the NtaA/SnaA/DszA monooxygenase family. RutA subfamily.

It carries out the reaction uracil + FMNH2 + NADH + O2 = (Z)-3-ureidoacrylate + FMN + NAD(+) + H2O + H(+). The catalysed reaction is thymine + FMNH2 + NADH + O2 = (Z)-2-methylureidoacrylate + FMN + NAD(+) + H2O + H(+). In terms of biological role, catalyzes the pyrimidine ring opening between N-3 and C-4 by an unusual flavin hydroperoxide-catalyzed mechanism, adding oxygen atoms in the process to yield ureidoacrylate peracid, that immediately reacts with FMN forming ureidoacrylate and FMN-N(5)-oxide. The FMN-N(5)-oxide reacts spontaneously with NADH to produce FMN. Requires the flavin reductase RutF to regenerate FMN in vivo. The protein is Pyrimidine monooxygenase RutA of Escherichia coli O45:K1 (strain S88 / ExPEC).